Consider the following 38-residue polypeptide: Photosystem II reaction center protein L (38 aa).

The chain crosses the membrane as a helical span at residues 17–37 (SLFWGLLLIFVLAVLFSSYFF).

It belongs to the PsbL family. PSII is composed of 1 copy each of membrane proteins PsbA, PsbB, PsbC, PsbD, PsbE, PsbF, PsbH, PsbI, PsbJ, PsbK, PsbL, PsbM, PsbT, PsbX, PsbY, PsbZ, Psb30/Ycf12, at least 3 peripheral proteins of the oxygen-evolving complex and a large number of cofactors. It forms dimeric complexes.

The protein localises to the plastid. It localises to the chloroplast thylakoid membrane. Its function is as follows. One of the components of the core complex of photosystem II (PSII). PSII is a light-driven water:plastoquinone oxidoreductase that uses light energy to abstract electrons from H(2)O, generating O(2) and a proton gradient subsequently used for ATP formation. It consists of a core antenna complex that captures photons, and an electron transfer chain that converts photonic excitation into a charge separation. This subunit is found at the monomer-monomer interface and is required for correct PSII assembly and/or dimerization. The sequence is that of Photosystem II reaction center protein L from Gracilaria tenuistipitata var. liui (Red alga).